The primary structure comprises 63 residues: 2-hydroxymuconate tautomerase (63 aa).

Proline 2 functions as the Proton acceptor; via imino nitrogen in the catalytic mechanism.

Belongs to the 4-oxalocrotonate tautomerase family. Homohexamer.

The catalysed reaction is (2Z,4E)-2-hydroxyhexa-2,4-dienedioate = (3E)-2-oxohex-3-enedioate. The protein operates within xenobiotic degradation; toluene degradation. It functions in the pathway xenobiotic degradation; xylene degradation. Functionally, catalyzes the ketonization of 2-hydroxymuconate stereoselectively to yield 2-oxo-3-hexenedioate. This Pseudomonas putida (Arthrobacter siderocapsulatus) protein is 2-hydroxymuconate tautomerase (xylH).